The chain runs to 491 residues: Chondroitin proteoglycan 2 (491 aa).

Residues 1–18 (MKTIVALGLLALATAASG) form the signal peptide. The 58-residue stretch at 21 to 78 (LQDCTNALDGLYAIGNCESQFLTCSGGIARIMDCPADLIYNEPLLICDWRHNVVGCEG) folds into the Chitin-binding type-2 1 domain. An intrachain disulfide couples cysteine 54 to cysteine 67. Residues 80 to 126 (GEASGEQSGEGSGEASGEGSGEASGEGSGEASGEGSGSGEGSGEENN) form a disordered region. Positions 87-120 (SGEGSGEASGEGSGEASGEGSGEASGEGSGSGEG) are enriched in gly residues. A Chitin-binding type-2 2 domain is found at 125-182 (NNVCEGLEDGAYSSGGCTTYYFFCTDNTARFLSCPTPLFYDVATQKCAWKALVEECNG). Cysteine 158 and cysteine 171 are disulfide-bonded. The segment at 187–217 (DGSGETSGEGSGEASGENSGENSGEGSGEFE) is disordered. Residues serine 197 and serine 201 are each glycosylated (O-linked (Xyl...) (chondroitin sulfate) serine). The segment covering 200 to 210 (ASGENSGENSG) has biased composition (low complexity). 4 Chitin-binding type-2 domains span residues 217 to 274 (EPTC…ECHG), 279 to 334 (APVC…ECQE), 367 to 423 (ENEC…KCLI), and 436 to 491 (PFDC…LQCH). 2 disulfide bridges follow: cysteine 250/cysteine 263 and cysteine 310/cysteine 323. Residues 336–367 (SGEESSGEASGEQSGEGSGEASGEASGEASGE) are disordered. Over residues 356 to 367 (ASGEASGEASGE) the composition is skewed to low complexity. Cysteine 399 and cysteine 412 are oxidised to a cystine. An N-linked (GlcNAc...) asparagine glycan is attached at asparagine 464. Residues cysteine 467 and cysteine 481 are joined by a disulfide bond.

In terms of biological role, required for polar body extrusion during cytokinesis in embryo development. Affects cortical granule size. Shown to have roles in meiotic chromosome segregation, osmotic barrier function and polarization in conjunction with cpg-2. Binds chitin. The chain is Chondroitin proteoglycan 2 from Caenorhabditis briggsae.